The chain runs to 805 residues: Leucine--tRNA ligase (805 aa).

The short motif at P41–H52 is the 'HIGH' region element. The 'KMSKS' region motif lies at K577–S581. K580 contributes to the ATP binding site.

The protein belongs to the class-I aminoacyl-tRNA synthetase family.

The protein resides in the cytoplasm. The enzyme catalyses tRNA(Leu) + L-leucine + ATP = L-leucyl-tRNA(Leu) + AMP + diphosphate. The sequence is that of Leucine--tRNA ligase from Staphylococcus aureus (strain JH1).